A 462-amino-acid polypeptide reads, in one-letter code: L-seryl-tRNA(Sec) selenium transferase (462 aa).

An N6-(pyridoxal phosphate)lysine modification is found at Lys293.

The protein belongs to the SelA family. Pyridoxal 5'-phosphate serves as cofactor.

It is found in the cytoplasm. It catalyses the reaction L-seryl-tRNA(Sec) + selenophosphate + H(+) = L-selenocysteinyl-tRNA(Sec) + phosphate. The protein operates within aminoacyl-tRNA biosynthesis; selenocysteinyl-tRNA(Sec) biosynthesis; selenocysteinyl-tRNA(Sec) from L-seryl-tRNA(Sec) (bacterial route): step 1/1. In terms of biological role, converts seryl-tRNA(Sec) to selenocysteinyl-tRNA(Sec) required for selenoprotein biosynthesis. This chain is L-seryl-tRNA(Sec) selenium transferase, found in Clostridium botulinum (strain ATCC 19397 / Type A).